Reading from the N-terminus, the 175-residue chain is Gamma-crystallin B (175 aa).

Beta/gamma crystallin 'Greek key' domains are found at residues 2-40 and 41-83; these read GKITFFEDRSFQGRCYECSSDCPNLQTYFSRCNSVRVDS and GCWM…CLIP. Residues 84-88 form a connecting peptide region; it reads QHSGT. Beta/gamma crystallin 'Greek key' domains are found at residues 89 to 129 and 130 to 172; these read YRMR…NVME and GCWV…RRVM.

It belongs to the beta/gamma-crystallin family.

Its function is as follows. Crystallins are the dominant structural components of the vertebrate eye lens. This Mus musculus (Mouse) protein is Gamma-crystallin B (Crygb).